Reading from the N-terminus, the 446-residue chain is White-opaque regulator 2 (446 aa).

A compositionally biased stretch (polar residues) spans methionine 1 to threonine 24. Residues methionine 1 to phenylalanine 203 form a disordered region. Residues threonine 30–serine 64 are compositionally biased toward low complexity. Over residues threonine 67–alanine 86 the composition is skewed to polar residues. Composition is skewed to low complexity over residues serine 87 to proline 97 and serine 104 to serine 120. A compositionally biased stretch (polar residues) spans asparagine 121–valine 144. The span at valine 166–glutamine 184 shows a compositional bias: pro residues. Residues glutamine 185 to proline 195 are compositionally biased toward low complexity. A DNA-binding region (zn(2)-C6 fungal-type) is located at residues cysteine 305 to cysteine 332. Positions glutamine 336 to leucine 402 are disordered. Residues asparagine 358–glutamine 369 are compositionally biased toward low complexity. A compositionally biased stretch (polar residues) spans histidine 387–asparagine 401.

Its subcellular location is the nucleus. Functionally, transcriptional regulator of the switch between 2 heritable states, the white and opaque states. These 2 cell types differ in many characteristics, including cell structure, mating competence, and virulence. Each state is heritable for many generations, and switching between states occurs stochastically, at low frequency. WOR2 is necessary for the stability of the opaque state phenotypic switching from the white to the opaque phase is a necessary step for mating. Plays a role in cell adhesion and pseudohyphal growth. This Candida albicans (strain SC5314 / ATCC MYA-2876) (Yeast) protein is White-opaque regulator 2 (WOR2).